Reading from the N-terminus, the 408-residue chain is Argininosuccinate synthase (408 aa).

Residues 9-17 (AYSGGLDTS) and A36 contribute to the ATP site. L-citrulline-binding residues include Y87 and S92. G117 serves as a coordination point for ATP. L-aspartate-binding residues include T119, N123, and D124. N123 contributes to the L-citrulline binding site. Residues R127, S176, S185, E261, and Y273 each contribute to the L-citrulline site.

This sequence belongs to the argininosuccinate synthase family. Type 1 subfamily. In terms of assembly, homotetramer.

The protein localises to the cytoplasm. The catalysed reaction is L-citrulline + L-aspartate + ATP = 2-(N(omega)-L-arginino)succinate + AMP + diphosphate + H(+). Its pathway is amino-acid biosynthesis; L-arginine biosynthesis; L-arginine from L-ornithine and carbamoyl phosphate: step 2/3. This Deinococcus deserti (strain DSM 17065 / CIP 109153 / LMG 22923 / VCD115) protein is Argininosuccinate synthase.